The sequence spans 212 residues: ER lumen protein-retaining receptor (212 aa).

The Lumenal segment spans residues 1–2 (MN). The chain crosses the membrane as a helical span at residues 3-21 (IFRFAGDLSHVFAIIILLL). The Cytoplasmic segment spans residues 22-35 (KIWKTRSCAGISGK). Residues 36–53 (SQILFAVVYLTRYLDLFT) traverse the membrane as a helical segment. The Lumenal portion of the chain corresponds to 54-61 (TYVSLYNS). Residues 62 to 80 (VMKVLFLATSGATVYLMYV) form a helical membrane-spanning segment. Over 81-96 (KFKATYDHNHDSFRIE) the chain is Cytoplasmic. A helical transmembrane segment spans residues 97–110 (FLLVPCALLSLVIN). Over 111–117 (HEFTVME) the chain is Lumenal. Residues 118–137 (VLWTFSIYLESVAILPQLFL) traverse the membrane as a helical segment. At 138–149 (VSRTGEAESITS) the chain is on the cytoplasmic side. A helical membrane pass occupies residues 150-168 (HYLFALGSYRALYLLNWVY). Residues 169–178 (RYMVESHYDL) lie on the Lumenal side of the membrane. Residues 179 to 199 (IAIFAGVVQTVLYCDFFYLYI) form a helical membrane-spanning segment. The Cytoplasmic portion of the chain corresponds to 200 to 212 (TKVLKGKKLQLPA).

Belongs to the ERD2 family.

The protein localises to the endoplasmic reticulum membrane. Functionally, required for the retention of luminal endoplasmic reticulum proteins. Determines the specificity of the luminal ER protein retention system. Also required for normal vesicular traffic through the Golgi. In Drosophila melanogaster (Fruit fly), this protein is ER lumen protein-retaining receptor (KdelR).